A 438-amino-acid chain; its full sequence is Adenylosuccinate synthetase (438 aa).

Residues 13–19 (GDEGKGK) and 41–43 (GHT) contribute to the GTP site. Residue D14 is the Proton acceptor of the active site. Mg(2+)-binding residues include D14 and G41. IMP is bound by residues 14 to 17 (DEGK), 39 to 42 (NAGH), T136, R150, Q231, T246, and R310. H42 functions as the Proton donor in the catalytic mechanism. Position 306-312 (306-312 (STTGRRR)) interacts with substrate. GTP contacts are provided by residues R312, 338–340 (KID), and 421–423 (STG).

This sequence belongs to the adenylosuccinate synthetase family. As to quaternary structure, homodimer. Mg(2+) is required as a cofactor.

It localises to the cytoplasm. The enzyme catalyses IMP + L-aspartate + GTP = N(6)-(1,2-dicarboxyethyl)-AMP + GDP + phosphate + 2 H(+). It functions in the pathway purine metabolism; AMP biosynthesis via de novo pathway; AMP from IMP: step 1/2. In terms of biological role, plays an important role in the de novo pathway of purine nucleotide biosynthesis. Catalyzes the first committed step in the biosynthesis of AMP from IMP. In Blochmanniella floridana, this protein is Adenylosuccinate synthetase.